We begin with the raw amino-acid sequence, 463 residues long: Exodeoxyribonuclease 7 large subunit (463 aa).

It belongs to the XseA family. As to quaternary structure, heterooligomer composed of large and small subunits.

Its subcellular location is the cytoplasm. It catalyses the reaction Exonucleolytic cleavage in either 5'- to 3'- or 3'- to 5'-direction to yield nucleoside 5'-phosphates.. Its function is as follows. Bidirectionally degrades single-stranded DNA into large acid-insoluble oligonucleotides, which are then degraded further into small acid-soluble oligonucleotides. This Bordetella bronchiseptica (strain ATCC BAA-588 / NCTC 13252 / RB50) (Alcaligenes bronchisepticus) protein is Exodeoxyribonuclease 7 large subunit.